The following is a 68-amino-acid chain: Beta-defensin 1 (68 aa).

The signal sequence occupies residues Met-1–Gly-21. A propeptide spanning residues Gly-22 to Ser-32 is cleaved from the precursor. Intrachain disulfides connect Cys-37–Cys-66, Cys-44–Cys-59, and Cys-49–Cys-67.

It belongs to the beta-defensin family. In terms of assembly, monomer. Homodimer.

The protein localises to the secreted. The protein resides in the membrane. Functionally, has bactericidal activity. May act as a ligand for C-C chemokine receptor CCR6. Positively regulates the sperm motility and bactericidal activity in a CCR6-dependent manner. Binds to CCR6 and triggers Ca2+ mobilization in the sperm which is important for its motility. This Pan troglodytes (Chimpanzee) protein is Beta-defensin 1 (DEFB1).